Consider the following 801-residue polypeptide: tRNA(Met) cytidine acetyltransferase TmcA (801 aa).

ATP-binding positions include Q228, 256-265 (GRGKSSAVGL), and R412. The region spanning 457–637 (EELFLKNEEE…YTVIVVKPLS (181 aa)) is the N-acetyltransferase domain. Acetyl-CoA-binding positions include 562–564 (IAT), 569–575 (MGKGLGS), and E602.

This sequence belongs to the RNA cytidine acetyltransferase family. TmcA subfamily.

It localises to the cytoplasm. It carries out the reaction cytidine(34) in elongator tRNA(Met) + acetyl-CoA + ATP + H2O = N(4)-acetylcytidine(34) in elongator tRNA(Met) + ADP + phosphate + CoA + H(+). Catalyzes the formation of N(4)-acetylcytidine (ac(4)C) at the wobble position of tRNA(Met), by using acetyl-CoA as an acetyl donor and ATP (or GTP). The protein is tRNA(Met) cytidine acetyltransferase TmcA of Thermofilum pendens (strain DSM 2475 / Hrk 5).